Here is a 228-residue protein sequence, read N- to C-terminus: MAAPATRSRYLLRLTVTLGPRSRSYHAPPPPRRRPAPHWPDRENLMTPRWQLTPRYAAKQFGRHGAISGVPPASLWPSSEQLCELEAEEREWYPSLATMQESLRVQQQAAEARRQAREQHIAECMAKMPQMIENWRKQKRERWEKIQADKERRARLQAEAQEQLGYHVDPRSARFQELLQDLDKQQRKRLKEERQRQKKEARIAAMASAEGQDSAEAQDSAASGKPSS.

2 disordered regions span residues Pro-20–Asn-44 and Gln-186–Ser-228. Residues Thr-98–Ala-207 adopt a coiled-coil conformation. Positions Lys-184 to Glu-200 match the Nuclear localization signal motif. The segment covering Gln-186 to Arg-202 has biased composition (basic and acidic residues). Residues Gln-212–Ser-228 show a composition bias toward low complexity.

Belongs to the mitochondrion-specific ribosomal protein mL64 family. In terms of assembly, component of the mitochondrial ribosome large subunit (39S) which comprises a 16S rRNA and about 50 distinct proteins. Interacts with GADD45A, GADD45B and GADD45G. Interacts with NR4A1 via the NR4A1 AB domain. Interacts with ATAD3A and ATAD3B.

It is found in the mitochondrion. Its subcellular location is the nucleus. In terms of biological role, acts as a negative regulator of G1 to S cell cycle phase progression by inhibiting cyclin-dependent kinases. Inhibitory effects are additive with GADD45 proteins but also occur in the absence of GADD45 proteins. Acts as a repressor of the orphan nuclear receptor NR4A1 by inhibiting AB domain-mediated transcriptional activity. May be involved in the hormone-mediated regulation of NR4A1 transcriptional activity. May play a role in mitochondrial protein synthesis. The sequence is that of Large ribosomal subunit protein mL64 (Gadd45gip1) from Rattus norvegicus (Rat).